Reading from the N-terminus, the 125-residue chain is MPTINQLVRKGREKGEQKSTAPALKSCPQKRGVCTRVYTTTPKKPNSALRKIARVRLTNGIEVTAYIPGIGHNLQEHSVVLIRGGRVKDLPGVRYHIIRGTLDASGVQKRNQGRSKYGTKRPKKK.

The disordered stretch occupies residues 1–27 (MPTINQLVRKGREKGEQKSTAPALKSC). Aspartate 89 is modified (3-methylthioaspartic acid). Residues 103–125 (DASGVQKRNQGRSKYGTKRPKKK) form a disordered region. Positions 111–125 (NQGRSKYGTKRPKKK) are enriched in basic residues.

The protein belongs to the universal ribosomal protein uS12 family. As to quaternary structure, part of the 30S ribosomal subunit. Contacts proteins S8 and S17. May interact with IF1 in the 30S initiation complex.

With S4 and S5 plays an important role in translational accuracy. Functionally, interacts with and stabilizes bases of the 16S rRNA that are involved in tRNA selection in the A site and with the mRNA backbone. Located at the interface of the 30S and 50S subunits, it traverses the body of the 30S subunit contacting proteins on the other side and probably holding the rRNA structure together. The combined cluster of proteins S8, S12 and S17 appears to hold together the shoulder and platform of the 30S subunit. The chain is Small ribosomal subunit protein uS12 from Syntrophomonas wolfei subsp. wolfei (strain DSM 2245B / Goettingen).